Here is a 295-residue protein sequence, read N- to C-terminus: Small ribosomal subunit protein uS2 (295 aa).

An N-acetylserine modification is found at Ser-2. Residue Ser-43 is modified to Phosphoserine. The residue at position 52 (Lys-52) is an N6-acetyllysine. An interaction with PPP1R16B region spans residues 54–113; sequence TWEKLLLAARAIVAIENPADVSVISSRNTGQRAVLKFAAATGATPIAGRFTPGTFTNQIQ. Lys-89 carries the post-translational modification N6-acetyllysine; alternate. Lys-89 participates in a covalent cross-link: Glycyl lysine isopeptide (Lys-Gly) (interchain with G-Cter in SUMO2); alternate. Residue Thr-97 is modified to Phosphothreonine. 2 laminin-binding regions span residues 161–180 and 205–229; these read IPCN…MLAR and RDPE…EFQG. Basic and acidic residues predominate over residues 214-227; it reads EQAAAEKAVTKEEF. The interval 214–240 is disordered; it reads EQAAAEKAVTKEEFQGEWTAPAPEFTA. 4 [DE]-W-[ST] repeats span residues 230–232, 247–249, 266–268, and 275–277; these read EWT and DWS. The segment at 242–295 is laminin-binding; the sequence is QPEVADWSEGVQVPSVPIQQFPTEDWSARPFTEDWSAAPTAQATEWVGTTSELS. The interval 263–295 is disordered; it reads PTEDWSARPFTEDWSAAPTAQATEWVGTTSELS. Polar residues predominate over residues 280-295; it reads PTAQATEWVGTTSELS.

Belongs to the universal ribosomal protein uS2 family. Monomer (37LRP) and homodimer (67LR). Component of the small ribosomal subunit. Mature ribosomes consist of a small (40S) and a large (60S) subunit. The 40S subunit contains about 33 different proteins and 1 molecule of RNA (18S). The 60S subunit contains about 49 different proteins and 3 molecules of RNA (28S, 5.8S and 5S). Interacts with RPS21. Interacts with several laminins including at least LAMB1. Interacts with MDK. The mature dimeric form interacts with PPP1R16B (via its fourth ankyrin repeat). Interacts with PPP1CA only in the presence of PPP1R16B. Post-translationally, acylated. Acylation may be a prerequisite for conversion of the monomeric 37 kDa laminin receptor precursor (37LRP) to the mature dimeric 67 kDa laminin receptor (67LR), and may provide a mechanism for membrane association. In terms of processing, cleaved by stromelysin-3 (ST3) at the cell surface. Cleavage by stromelysin-3 may be a mechanism to alter cell-extracellular matrix interactions.

Its subcellular location is the cell membrane. The protein localises to the cytoplasm. It is found in the nucleus. In terms of biological role, required for the assembly and/or stability of the 40S ribosomal subunit. Required for the processing of the 20S rRNA-precursor to mature 18S rRNA in a late step of the maturation of 40S ribosomal subunits. Also functions as a cell surface receptor for laminin. Plays a role in cell adhesion to the basement membrane and in the consequent activation of signaling transduction pathways. May play a role in cell fate determination and tissue morphogenesis. Also acts as a receptor for several other ligands, including the pathogenic prion protein, viruses, and bacteria. Acts as a PPP1R16B-dependent substrate of PPP1CA. The polypeptide is Small ribosomal subunit protein uS2 (Ovis aries (Sheep)).